Here is a 75-residue protein sequence, read N- to C-terminus: Small ribosomal subunit protein bS18 (75 aa).

It belongs to the bacterial ribosomal protein bS18 family. In terms of assembly, part of the 30S ribosomal subunit. Forms a tight heterodimer with protein bS6.

Its function is as follows. Binds as a heterodimer with protein bS6 to the central domain of the 16S rRNA, where it helps stabilize the platform of the 30S subunit. This Shewanella amazonensis (strain ATCC BAA-1098 / SB2B) protein is Small ribosomal subunit protein bS18.